A 163-amino-acid chain; its full sequence is Nucleotide-binding protein DET1318 (163 aa).

This sequence belongs to the YajQ family.

Functionally, nucleotide-binding protein. The polypeptide is Nucleotide-binding protein DET1318 (Dehalococcoides mccartyi (strain ATCC BAA-2266 / KCTC 15142 / 195) (Dehalococcoides ethenogenes (strain 195))).